Here is a 177-residue protein sequence, read N- to C-terminus: Large ribosomal subunit protein uL6 (177 aa).

This sequence belongs to the universal ribosomal protein uL6 family. As to quaternary structure, part of the 50S ribosomal subunit.

This protein binds to the 23S rRNA, and is important in its secondary structure. It is located near the subunit interface in the base of the L7/L12 stalk, and near the tRNA binding site of the peptidyltransferase center. In Methylococcus capsulatus (strain ATCC 33009 / NCIMB 11132 / Bath), this protein is Large ribosomal subunit protein uL6.